The following is a 690-amino-acid chain: Glycine--tRNA ligase 1, mitochondrial (690 aa).

Residues 1–24 (MSFFNISRRFYSQIVKKSVKIKRM) constitute a mitochondrion transit peptide. Ser-25 bears the N-acetylserine mark. Position 226 is a phosphoserine (Ser-226). Glu-251 serves as a coordination point for glycine. ATP contacts are provided by residues 283–285 (RNE) and 294–295 (RV). A glycine-binding site is contributed by Glu-302. 410-411 (EC) provides a ligand contact to ATP. Residues Ser-476 and Ser-528 each carry the phosphoserine modification. 531-533 (EPS) is a glycine binding site. Arg-538 serves as a coordination point for ATP. Thr-689 carries the phosphothreonine modification.

Belongs to the class-II aminoacyl-tRNA synthetase family. As to quaternary structure, homodimer.

It localises to the cytoplasm. It is found in the mitochondrion matrix. It catalyses the reaction tRNA(Gly) + glycine + ATP = glycyl-tRNA(Gly) + AMP + diphosphate. The enzyme catalyses 2 ATP + H(+) = P(1),P(4)-bis(5'-adenosyl) tetraphosphate + diphosphate. Catalyzes the ATP-dependent ligation of glycine to the 3'-end of its cognate tRNA, via the formation of an aminoacyl-adenylate intermediate (Gly-AMP). Also produces diadenosine tetraphosphate (Ap4A), a universal pleiotropic signaling molecule needed for cell regulation pathways, by direct condensation of 2 ATPs. Thereby, may play a special role in Ap4A homeostasis. The chain is Glycine--tRNA ligase 1, mitochondrial (GRS1) from Saccharomyces cerevisiae (strain ATCC 204508 / S288c) (Baker's yeast).